Consider the following 537-residue polypeptide: Chaperonin GroEL (537 aa).

Residues 29-32 (TLGP), 86-90 (DGTTT), Gly413, and Asp492 each bind ATP.

This sequence belongs to the chaperonin (HSP60) family. As to quaternary structure, forms a cylinder of 14 subunits composed of two heptameric rings stacked back-to-back. Interacts with the co-chaperonin GroES.

It localises to the cytoplasm. The catalysed reaction is ATP + H2O + a folded polypeptide = ADP + phosphate + an unfolded polypeptide.. Together with its co-chaperonin GroES, plays an essential role in assisting protein folding. The GroEL-GroES system forms a nano-cage that allows encapsulation of the non-native substrate proteins and provides a physical environment optimized to promote and accelerate protein folding. The protein is Chaperonin GroEL of Dehalococcoides mccartyi (strain ATCC BAA-2266 / KCTC 15142 / 195) (Dehalococcoides ethenogenes (strain 195)).